The primary structure comprises 377 residues: Delta(12) fatty acid desaturase DES8.11 (377 aa).

The next 2 helical transmembrane spans lie at 55–75 and 79–99; these read LIVA…IPTP and LAWP…WVIG. The short motif at 100-104 is the Histidine box-1 element; that stretch reads HECGH. Residues 112 to 132 form a helical membrane-spanning segment; sequence LIDDIVGFVLHSALLTPYFSW. The Histidine box-2 motif lies at 136 to 140; the sequence is HRNHH. The next 3 helical transmembrane spans lie at 174–194, 220–240, and 244–264; these read VFTL…TNIS, VLLS…LVAA, and AWVI…FVLI. The Histidine box-3 motif lies at 310–314; it reads HVLHH.

Belongs to the fatty acid desaturase type 1 family.

Its subcellular location is the membrane. The protein operates within lipid metabolism; polyunsaturated fatty acid biosynthesis. Its function is as follows. Converts linoleic acid into a conjugated octadecatrienoic acid, probably calendic acid. This Calendula officinalis (Pot marigold) protein is Delta(12) fatty acid desaturase DES8.11.